The following is a 227-amino-acid chain: Translation initiation factor 6 (227 aa).

Belongs to the eIF-6 family.

In terms of biological role, binds to the 50S ribosomal subunit and prevents its association with the 30S ribosomal subunit to form the 70S initiation complex. The polypeptide is Translation initiation factor 6 (Staphylothermus marinus (strain ATCC 43588 / DSM 3639 / JCM 9404 / F1)).